The primary structure comprises 371 residues: Vasopressin V2 receptor (371 aa).

The disordered stretch occupies residues 1–27 (MILVSTTSAVPGALSSPSSPSNSSQEE). Residues 1 to 38 (MILVSTTSAVPGALSSPSSPSNSSQEELLDDRDPLLVR) lie on the Extracellular side of the membrane. Low complexity predominate over residues 15 to 24 (SSPSSPSNSS). The N-linked (GlcNAc...) asparagine glycan is linked to Asn-22. The helical transmembrane segment at 39 to 63 (AELALLSTIFVAVALSNGLVLGALI) threads the bilayer. Residues 64–77 (RRGRRGRWAPMHVF) lie on the Cytoplasmic side of the membrane. Residues 78-98 (ISHLCLADLAVALFQVLPQLA) traverse the membrane as a helical segment. Over 99 to 113 (WDATDRFHGPDALCR) the chain is Extracellular. Residues 114–135 (AVKYLQMVGMYASSYMILAMTL) form a helical membrane-spanning segment. Topologically, residues 136-159 (DRHRAICRPMLAYRHGGGARWNRP) are cytoplasmic. Residues 160–180 (VLVAWAFSLLLSLPQLFIFAQ) traverse the membrane as a helical segment. Topologically, residues 181 to 200 (RDVGNGSGVFDCWARFAEPW) are extracellular. Asn-185 carries an N-linked (GlcNAc...) asparagine glycan. The chain crosses the membrane as a helical span at residues 201–220 (GLRAYVTWIALMVFVAPALG). At 221–271 (IAACQVLIFREIHASLVPGPSERAGRRRRGHRTGSPSEGAHVSAAMAKTVR) the chain is on the cytoplasmic side. The disordered stretch occupies residues 240–259 (PSERAGRRRRGHRTGSPSEG). The chain crosses the membrane as a helical span at residues 272–293 (MTLVIVIVYVLCWAPFFLVQLW). Over 294 to 308 (AAWDPEAPLERPPFV) the chain is Extracellular. The chain crosses the membrane as a helical span at residues 309-328 (LLMLLASLNSCTNPWIYASF). At 329-371 (SSSVSSELRSLLCCAQRHTTHSLGPQDESCATASSSLMKDTPS) the chain is on the cytoplasmic side. S-palmitoyl cysteine attachment occurs at residues Cys-341 and Cys-342. Positions 349-371 (HSLGPQDESCATASSSLMKDTPS) are disordered. A compositionally biased stretch (polar residues) spans 357-371 (SCATASSSLMKDTPS).

Belongs to the G-protein coupled receptor 1 family. Vasopressin/oxytocin receptor subfamily. As to quaternary structure, interacts with ARRDC4. Identified in a complex containing at least ARRDC4, V2R and HGS. Interacts with TMEM147. As to expression, highly expressed in kidney (at protein level) and moderately expressed in liver (at protein level). No or extremely low expression in left ventricule, muscle, bone and brain (at protein level).

The protein localises to the cell membrane. Receptor for arginine vasopressin. The activity of this receptor is mediated by G proteins which activate adenylate cyclase. Involved in renal water reabsorption. The sequence is that of Vasopressin V2 receptor (Avpr2) from Mus musculus (Mouse).